A 427-amino-acid chain; its full sequence is Methylthioribose kinase 2 (427 aa).

ATP contacts are provided by residues 49–53 (DGNLN), lysine 68, and 122–124 (RYI). Asparagine 51 contributes to the substrate binding site. Aspartate 243 is a binding site for substrate. 260–262 (DPE) is a binding site for ATP. Arginine 370 lines the substrate pocket.

The protein belongs to the methylthioribose kinase family. Homodimer.

It catalyses the reaction 5-(methylsulfanyl)-D-ribose + ATP = 5-(methylsulfanyl)-alpha-D-ribose 1-phosphate + ADP + H(+). Its pathway is amino-acid biosynthesis; L-methionine biosynthesis via salvage pathway; S-methyl-5-thio-alpha-D-ribose 1-phosphate from S-methyl-5'-thioadenosine (hydrolase route): step 2/2. Functionally, catalyzes the phosphorylation of methylthioribose into methylthioribose-1-phosphate. This is Methylthioribose kinase 2 (MTK2) from Oryza sativa subsp. japonica (Rice).